A 73-amino-acid polypeptide reads, in one-letter code: UPF0235 protein HY04AAS1_1378 (73 aa).

This sequence belongs to the UPF0235 family.

This chain is UPF0235 protein HY04AAS1_1378, found in Hydrogenobaculum sp. (strain Y04AAS1).